The following is a 530-amino-acid chain: Bifunctional purine biosynthesis protein PurH (530 aa).

In terms of domain architecture, MGS-like spans 1–148 (MNNPRPIRRA…KNHKDVTIVV (148 aa)).

It belongs to the PurH family.

It carries out the reaction (6R)-10-formyltetrahydrofolate + 5-amino-1-(5-phospho-beta-D-ribosyl)imidazole-4-carboxamide = 5-formamido-1-(5-phospho-D-ribosyl)imidazole-4-carboxamide + (6S)-5,6,7,8-tetrahydrofolate. The catalysed reaction is IMP + H2O = 5-formamido-1-(5-phospho-D-ribosyl)imidazole-4-carboxamide. It participates in purine metabolism; IMP biosynthesis via de novo pathway; 5-formamido-1-(5-phospho-D-ribosyl)imidazole-4-carboxamide from 5-amino-1-(5-phospho-D-ribosyl)imidazole-4-carboxamide (10-formyl THF route): step 1/1. It functions in the pathway purine metabolism; IMP biosynthesis via de novo pathway; IMP from 5-formamido-1-(5-phospho-D-ribosyl)imidazole-4-carboxamide: step 1/1. In Aliivibrio salmonicida (strain LFI1238) (Vibrio salmonicida (strain LFI1238)), this protein is Bifunctional purine biosynthesis protein PurH.